The chain runs to 412 residues: Imidazolonepropionase (412 aa).

2 residues coordinate Fe(3+): His71 and His73. His71 and His73 together coordinate Zn(2+). The 4-imidazolone-5-propanoate site is built by Arg80, Tyr143, and His176. Residue Tyr143 coordinates N-formimidoyl-L-glutamate. Position 241 (His241) interacts with Fe(3+). Residue His241 participates in Zn(2+) binding. Position 244 (Gln244) interacts with 4-imidazolone-5-propanoate. Asp316 is a Fe(3+) binding site. Residue Asp316 participates in Zn(2+) binding. N-formimidoyl-L-glutamate contacts are provided by Asn318 and Gly320. Thr321 contacts 4-imidazolone-5-propanoate.

It belongs to the metallo-dependent hydrolases superfamily. HutI family. Zn(2+) serves as cofactor. Requires Fe(3+) as cofactor.

The protein resides in the cytoplasm. It carries out the reaction 4-imidazolone-5-propanoate + H2O = N-formimidoyl-L-glutamate. The protein operates within amino-acid degradation; L-histidine degradation into L-glutamate; N-formimidoyl-L-glutamate from L-histidine: step 3/3. Functionally, catalyzes the hydrolytic cleavage of the carbon-nitrogen bond in imidazolone-5-propanoate to yield N-formimidoyl-L-glutamate. It is the third step in the universal histidine degradation pathway. In Aromatoleum aromaticum (strain DSM 19018 / LMG 30748 / EbN1) (Azoarcus sp. (strain EbN1)), this protein is Imidazolonepropionase.